A 368-amino-acid polypeptide reads, in one-letter code: Histidinol-phosphate aminotransferase (368 aa).

The residue at position 229 (Lys-229) is an N6-(pyridoxal phosphate)lysine.

It belongs to the class-II pyridoxal-phosphate-dependent aminotransferase family. Histidinol-phosphate aminotransferase subfamily. As to quaternary structure, homodimer. Pyridoxal 5'-phosphate serves as cofactor.

It carries out the reaction L-histidinol phosphate + 2-oxoglutarate = 3-(imidazol-4-yl)-2-oxopropyl phosphate + L-glutamate. It participates in amino-acid biosynthesis; L-histidine biosynthesis; L-histidine from 5-phospho-alpha-D-ribose 1-diphosphate: step 7/9. The protein is Histidinol-phosphate aminotransferase of Acidovorax ebreus (strain TPSY) (Diaphorobacter sp. (strain TPSY)).